Reading from the N-terminus, the 2541-residue chain is MVALSLKISIGNVVKTMQFEPSTMVYDACRMIRERIPEALAGPPNDFGLFLSDDDPKKGIWLEAGKALDYYMLRNGDTMEYRKKQRPLKIRMLDGTVKTIMVDDSKTVTDMLMTICARIGITNHDEYSLVRELMEEKKDEGTGTLRKDKTLLRDEKKMEKLKQKLHTDDELNWLDHGRTLREQGVEEHETLLLRRKFFYSDQNVDSRDPVQLNLLYVQARDDILNGSHPVSFDKACEFAGFQCQIQFGPHNEQKHKAGFLDLKDFLPKEYVKQKGERKIFQAHKNCGQMSEIEAKVRYVKLARSLKTYGVSFFLVKEKMKGKNKLVPRLLGITKECVMRVDEKTKEVIQEWSLTNIKRWAASPKSFTLDFGDYQDGYYSVQTTEGEQIAQLIAGYIDIILKKKKSKDHFGLEGDEESTMLEDSVSPKKSTVLQQQYNRVGKVEHGSVALPAIMRSGASGPENFQVGSMPPAQQQITSGQMHRGHMPPLTSAQQALTGTINSSMQAVQAAQATLDDFETLPPLGQDAASKAWRKNKMDESKHEIHSQVDAITAGTASVVNLTAGDPAETDYTAVGCAVTTISSNLTEMSRGVKLLAALLEDEGGNGRPLLQAAKGLAGAVSELLRSAQPASAEPRQNLLQAAGNVGQASGELLQQIGESDTDPHFQDVLMQLAKAVASAAAALVLKAKSVAQRTEDSGLQTQVIAAATQCALSTSQLVACTKVVAPTISSPVCQEQLVEAGRLVAKAVEGCVSASQAATEDGQLLRGVGAAATAVTQALNELLQHVKAHATGAGPAGRYDQATDTILTVTENIFSSMGDAGEMVRQARILAQATSDLVNAIKADAEGESDLENSRKLLSAAKILADATAKMVEAAKGAAAHPDSEEQQQRLREAAEGLRMATNAAAQNAIKKKLVQRLEHAAKQAAASATQTIAAAQHAASAPKASAGPQPLLVQSCKAVAEQIPLLVQGVRGSQAQPDSPSAQLALIAASQSFLQPGGKMVAAAKASVPTIQDQASAMQLSQCAKNLGTALAELRTAAQKAQEACGPLEMDSALSVVQNLEKDLQEIKAAARDGKLKPLPGETMEKCTQDLGNSTKAVSSAIAKLLGEIAQGNENYAGIAARDVAGGLRSLAQAARGVAALTSDPAVQAIVLDTASDVLDKASSLIEEAKKASGHPGDPESQQRLAQVAKAVTQALNRCVSCLPGQRDVDNALRAVGDASKRLLSDSLPPSTGTFQEAQSRLNEAAAGLNQAATELVQASRGTPQDLARASGRFGQDFSTFLEAGVEMAGQAPSQEDRAQVVSNLKGISMSSSKLLLAAKALSTDPASPNLKSQLAAAARAVTDSINQLITMCTQQAPGQKECDNALRQLETVRELLENPVQPINDMSYFGCLDSVMENSKVLGEAMTGISQNAKNGNLPEFGDAIATASKALCGFTEAAAQAAYLVGVSDPNSQAGQQGLVEPTQFARANQAIQMACQSLGEPGCTQAQVLSAATIVAKHTSALCNSCRLASARTANPTAKRQFVQSAKEVANSTANLVKTIKALDGDFTEENRAQCRAATAPLLEAVDNLSAFASNPEFSSVPAQISPEGRAAMEPIVISAKTMLESAGGLIQTARALAVNPRDPPRWSVLAGHSRTVSDSIKKLITSMRDKAPGQLECETAIAALNSCLRDLDQASLAAVSQQLAPREGISQEALHTQMLTAVQEISHLIEPLASAARAEASQLGHKVSQMAQYFEPLTLAAVGAASKTLSHPQQMALLDQTKTLAESALQLLYTAKEAGGNPKQAAHTQEALEEAVQMMTEAVEDLTTTLNEAASAAGVVGGMVDSITQAINQLDEGPMGDPEGSFVDYQTTMVRTAKAIAVTVQEMVTKSNTSPEELGPLANQLTSDYGRLASQAKPAAVAAENEEIGAHIKHRVQELGHGCSALVTKAGALQCSPSDVYTKKELIECARRVSEKVSHVLAALQAGNRGTQACITAASAVSGIIADLDTTIMFATAGTLNREGAETFADHREGILKTAKVLVEDTKVLVQNAAGSQEKLAQAAQSSVATITRLADVVKLGAASLGAEDPETQVVLINAVKDVAKALGDLISATKAAAGKVGDDPAVWQLKNSAKVMVTNVTSLLKTVKAVEDEATKGTRALEATTEHIRQELAVFCSPEPPAKTSTPEDFIRMTKGITMATAKAVAAGNSCRQEDVIATANLSRRAIADMLRACKEAAFHPEVAPDVRLRALHYGRECANGYLELLDHVLLTLQKPNPDLKQQLTGHSKRVAGSVTELIQAAEAMKGTEWVDPEDPTVIAENELLGAAAAIEAAAKKLEQLKPRAKPKEADESLNFEEQILEAAKSIAAATSALVKAASAAQRELVAQGKVGAIPANALDDGQWSQGLISAARMVAAATNNLCEAANAAVQGHASQEKLISSAKQVAASTAQLLVACKVKADQDSEAMKRLQAAGNAVKRASDNLVKAAQKAAAFEDQENETVVVKEKMVGGIAQIIAAQEEMLRKERELEEARKKLAQIRQQQYKFLPSELRDEH.

One can recognise an FERM domain in the interval 86 to 403 (RPLKIRMLDG…GYIDIILKKK (318 aa)). Thr-167 is modified (phosphothreonine). Residues 280-435 (FQAHKNCGQM…PKKSTVLQQQ (156 aa)) form an interaction with LAYN region. 5 positions are modified to phosphoserine: Ser-405, Ser-425, Ser-446, Ser-620, and Ser-729. The tract at residues 482-655 (RGHMPPLTSA…QASGELLQQI (174 aa)) is helical bundle R1. The tract at residues 656–786 (GESDTDPHFQ…ALNELLQHVK (131 aa)) is helical bundle R2. Residues 787 to 911 (AHATGAGPAG…NAAAQNAIKK (125 aa)) form a helical bundle R3 region. A helical bundle R4 region spans residues 913 to 1044 (LVQRLEHAAK…RTAAQKAQEA (132 aa)). Ser-1021 carries the phosphoserine modification. Positions 1046–1206 (GPLEMDSALS…NRCVSCLPGQ (161 aa)) are helical bundle R5. Position 1116 is a phosphotyrosine (Tyr-1116). Thr-1142 is subject to Phosphothreonine. Phosphoserine is present on residues Ser-1201 and Ser-1225. A helical bundle R6 region spans residues 1207–1357 (RDVDNALRAV…QLITMCTQQA (151 aa)). Thr-1263 carries the post-translational modification Phosphothreonine. Phosphoserine is present on residues Ser-1323 and Ser-1328. The interaction with SYNM stretch occupies residues 1327–1948 (ASPNLKSQLA…CSPSDVYTKK (622 aa)). The interval 1358-1453 (PGQKECDNAL…AYLVGVSDPN (96 aa)) is helical bundle R7A; Interaction with KANK1. The tract at residues 1359-1659 (GQKECDNALR…SMRDKAPGQL (301 aa)) is interaction with VCL and F-actin. The helical bundle R8 stretch occupies residues 1461–1580 (LVEPTQFARA…NLSAFASNPE (120 aa)). Position 1544 is an N6-acetyllysine (Lys-1544). The helical bundle R7B; Interaction with KANK1 stretch occupies residues 1581–1653 (FSSVPAQISP…IKKLITSMRD (73 aa)). The segment at 1655-1822 (APGQLECETA…TLNEAASAAG (168 aa)) is helical bundle R9. The tract at residues 1823–1973 (VVGGMVDSIT…VLAALQAGNR (151 aa)) is helical bundle R10. Phosphoserine is present on Ser-1849. Thr-1855 bears the Phosphothreonine mark. Ser-1878 is modified (phosphoserine). The helical bundle R11 stretch occupies residues 1974 to 2140 (GTQACITAAS…TVKAVEDEAT (167 aa)). Residue Lys-2031 is modified to N6-acetyllysine. Ser-2040 bears the Phosphoserine mark. Lys-2115 is subject to N6-acetyllysine. Residues 2141–2294 (KGTRALEATT…QAAEAMKGTE (154 aa)) form a helical bundle R12 region. The I/LWEQ domain occupies 2293–2533 (TEWVDPEDPT…QIRQQQYKFL (241 aa)). The interval 2300–2482 (DPTVIAENEL…AAQKAAAFED (183 aa)) is helical bundle R13.

Part of a complex composed of THSD1, PTK2/FAK1, TLN1 and VCL. Interacts with THSD1; this promotes interaction with PTK2/FAK1 and VCL. Interacts with NRAP and LAYN. Interacts with SYNM. Interacts with ITGB1; the interaction is prevented by competitive binding of ITGB1BP1. Binds with high affinity to VCL and with low affinity to integrins. Interacts with APBB1IP; this inhibits VCL binding. Interacts with PTK2/FAK1. Interacts with PIP5K1C. Interacts with F-actin. Interacts with SVEP1. Interacts (via R7 domain) with KANK1 or KANK2 (via KN motif); this interaction likely initiates the assembly of cortical microtubule stabilization complexes (CMSCs) at the vicinity of focal adhesions.

Its subcellular location is the cell projection. The protein localises to the ruffle membrane. It localises to the cytoplasm. It is found in the cytoskeleton. The protein resides in the cell surface. Its subcellular location is the cell junction. The protein localises to the focal adhesion. Functionally, high molecular weight cytoskeletal protein concentrated at regions of cell-matrix and cell-cell contacts. Involved in connections of major cytoskeletal structures to the plasma membrane. With KANK1 co-organize the assembly of cortical microtubule stabilizing complexes (CMSCs) positioned to control microtubule-actin crosstalk at focal adhesions (FAs) rims. The chain is Talin-1 (Tln1) from Mus musculus (Mouse).